We begin with the raw amino-acid sequence, 425 residues long: Serine--tRNA ligase (425 aa).

232 to 234 (TSE) serves as a coordination point for L-serine. Residues 263-265 (RRE) and Val279 each bind ATP. Residue Glu286 coordinates L-serine. 350–353 (EAVS) contacts ATP. Residue Thr387 participates in L-serine binding.

The protein belongs to the class-II aminoacyl-tRNA synthetase family. Type-1 seryl-tRNA synthetase subfamily. As to quaternary structure, homodimer. The tRNA molecule binds across the dimer.

The protein localises to the cytoplasm. It carries out the reaction tRNA(Ser) + L-serine + ATP = L-seryl-tRNA(Ser) + AMP + diphosphate + H(+). The enzyme catalyses tRNA(Sec) + L-serine + ATP = L-seryl-tRNA(Sec) + AMP + diphosphate + H(+). It functions in the pathway aminoacyl-tRNA biosynthesis; selenocysteinyl-tRNA(Sec) biosynthesis; L-seryl-tRNA(Sec) from L-serine and tRNA(Sec): step 1/1. Its function is as follows. Catalyzes the attachment of serine to tRNA(Ser). Is also able to aminoacylate tRNA(Sec) with serine, to form the misacylated tRNA L-seryl-tRNA(Sec), which will be further converted into selenocysteinyl-tRNA(Sec). The chain is Serine--tRNA ligase from Methanoculleus marisnigri (strain ATCC 35101 / DSM 1498 / JR1).